Reading from the N-terminus, the 97-residue chain is Co-chaperonin GroES (97 aa).

The protein belongs to the GroES chaperonin family. In terms of assembly, heptamer of 7 subunits arranged in a ring. Interacts with the chaperonin GroEL.

Its subcellular location is the cytoplasm. Together with the chaperonin GroEL, plays an essential role in assisting protein folding. The GroEL-GroES system forms a nano-cage that allows encapsulation of the non-native substrate proteins and provides a physical environment optimized to promote and accelerate protein folding. GroES binds to the apical surface of the GroEL ring, thereby capping the opening of the GroEL channel. This chain is Co-chaperonin GroES, found in Edwardsiella ictaluri (strain 93-146).